Consider the following 67-residue polypeptide: Large ribosomal subunit protein bL35 (67 aa).

Belongs to the bacterial ribosomal protein bL35 family.

In Dehalococcoides mccartyi (strain ATCC BAA-2266 / KCTC 15142 / 195) (Dehalococcoides ethenogenes (strain 195)), this protein is Large ribosomal subunit protein bL35.